A 68-amino-acid chain; its full sequence is DNA-directed RNA polymerase subunit omega (68 aa).

This sequence belongs to the RNA polymerase subunit omega family. In terms of assembly, the RNAP catalytic core consists of 2 alpha, 1 beta, 1 beta' and 1 omega subunit. When a sigma factor is associated with the core the holoenzyme is formed, which can initiate transcription.

The catalysed reaction is RNA(n) + a ribonucleoside 5'-triphosphate = RNA(n+1) + diphosphate. Its function is as follows. Promotes RNA polymerase assembly. Latches the N- and C-terminal regions of the beta' subunit thereby facilitating its interaction with the beta and alpha subunits. This is DNA-directed RNA polymerase subunit omega from Brevibacillus brevis (strain 47 / JCM 6285 / NBRC 100599).